Reading from the N-terminus, the 126-residue chain is Cystatin-like cysteine protease inhibitor EPIC1 (126 aa).

An N-terminal signal peptide occupies residues 1–21; sequence MTFLRPILALLAATALVTTSA. Asparagine 46 carries an N-linked (GlcNAc...) asparagine glycan. Residues 69 to 73 carry the Secondary area of contact motif; the sequence is QVVSG.

It belongs to the cystatin family. Interacts with the host papain-like cysteine protease RCR3. Interacts with the host papain-like cysteine protease C14.

Its subcellular location is the secreted. Functionally, secreted effector that interacts with and inhibits the pathogenesis-related papain-like cysteine proteases C14 and RCR3 of host plants. Inhibition of host proteases by a pathogen extracellular protease inhibitor forms a specific type of defense-counterdefense mechanism between plants and microbial pathogens. This is Cystatin-like cysteine protease inhibitor EPIC1 from Phytophthora infestans (Potato late blight agent).